We begin with the raw amino-acid sequence, 196 residues long: Putative NADH dehydrogenase/NAD(P)H nitroreductase SGR_2476 (196 aa).

The protein belongs to the nitroreductase family. HadB/RutE subfamily. FMN is required as a cofactor.

This is Putative NADH dehydrogenase/NAD(P)H nitroreductase SGR_2476 from Streptomyces griseus subsp. griseus (strain JCM 4626 / CBS 651.72 / NBRC 13350 / KCC S-0626 / ISP 5235).